Consider the following 166-residue polypeptide: Vasopressin-neurophysin 2-copeptin (166 aa).

The signal sequence occupies residues 1 to 19 (MPDATLPACFLGLLALTSA). Cys-20 and Cys-25 are oxidised to a cystine. Gly-28 carries the post-translational modification Glycine amide. 7 disulfides stabilise this stretch: Cys-41–Cys-85, Cys-44–Cys-58, Cys-52–Cys-75, Cys-59–Cys-65, Cys-92–Cys-104, Cys-98–Cys-116, and Cys-105–Cys-110. The N-linked (GlcNAc...) asparagine glycan is linked to Asn-133.

The protein belongs to the vasopressin/oxytocin family. As to quaternary structure, interacts with vasopressin receptors V1bR/AVPR1B (Ki=85 pM), V1aR/AVPR1A (Ki=0.6 nM) and V2R/AVPR2 (Ki=4.9 nM). Interacts with oxytocin receptor (OXTR) (Ki=110 nM). In terms of processing, a shorter neurophysin molecule (32-123) is called neurophysin-I and is derived from the complete protein (called neurophysin III) by proteolytic degradation (in vivo or after extraction).

Its subcellular location is the secreted. Its function is as follows. Neurophysin 2 specifically binds vasopressin. In terms of biological role, vasopressin has a direct antidiuretic action on the kidney, it also causes vasoconstriction of the peripheral vessels. Acts by binding to vasopressin receptors (V1bR/AVPR1B, V1aR/AVPR1A, and V2R/AVPR2). The sequence is that of Vasopressin-neurophysin 2-copeptin (AVP) from Sus scrofa (Pig).